Consider the following 321-residue polypeptide: Ribosomal RNA small subunit methyltransferase H (321 aa).

Residues 40–42 (GGH), Asp-60, Phe-84, Asp-106, and Gln-113 contribute to the S-adenosyl-L-methionine site.

It belongs to the methyltransferase superfamily. RsmH family.

It is found in the cytoplasm. The catalysed reaction is cytidine(1402) in 16S rRNA + S-adenosyl-L-methionine = N(4)-methylcytidine(1402) in 16S rRNA + S-adenosyl-L-homocysteine + H(+). Its function is as follows. Specifically methylates the N4 position of cytidine in position 1402 (C1402) of 16S rRNA. The chain is Ribosomal RNA small subunit methyltransferase H from Haemophilus influenzae (strain ATCC 51907 / DSM 11121 / KW20 / Rd).